Here is a 390-residue protein sequence, read N- to C-terminus: Uroporphyrinogen decarboxylase 2, chloroplastic (390 aa).

The N-terminal 30 residues, 1–30 (MATACPPLSLQPAYLSGRSARARRPPPAVR), are a transit peptide targeting the chloroplast. Residues 70–74 (RQAGR), Phe-89, Ser-119, Asp-120, Tyr-197, Ser-252, and His-367 contribute to the substrate site.

This sequence belongs to the uroporphyrinogen decarboxylase family. In terms of assembly, homodimer.

The protein localises to the plastid. The protein resides in the chloroplast. The enzyme catalyses uroporphyrinogen III + 4 H(+) = coproporphyrinogen III + 4 CO2. It participates in porphyrin-containing compound metabolism; protoporphyrin-IX biosynthesis; coproporphyrinogen-III from 5-aminolevulinate: step 4/4. Catalyzes the decarboxylation of four acetate groups of uroporphyrinogen-III to yield coproporphyrinogen-III. This chain is Uroporphyrinogen decarboxylase 2, chloroplastic, found in Oryza sativa subsp. japonica (Rice).